Here is a 127-residue protein sequence, read N- to C-terminus: uncharacterized protein (127 aa).

This is an uncharacterized protein from Rickettsia conorii (strain ATCC VR-613 / Malish 7).